Consider the following 245-residue polypeptide: Pyridoxine 5'-phosphate synthase (245 aa).

Asn-7 is a 3-amino-2-oxopropyl phosphate binding site. 9–10 (DH) serves as a coordination point for 1-deoxy-D-xylulose 5-phosphate. 3-amino-2-oxopropyl phosphate is bound at residue Arg-18. The Proton acceptor role is filled by His-43. The 1-deoxy-D-xylulose 5-phosphate site is built by Arg-45 and His-50. Catalysis depends on Glu-70, which acts as the Proton acceptor. Thr-100 is a 1-deoxy-D-xylulose 5-phosphate binding site. The active-site Proton donor is the His-190. 3-amino-2-oxopropyl phosphate contacts are provided by residues Gly-191 and 212–213 (GH).

This sequence belongs to the PNP synthase family. Homooctamer; tetramer of dimers.

The protein resides in the cytoplasm. It catalyses the reaction 3-amino-2-oxopropyl phosphate + 1-deoxy-D-xylulose 5-phosphate = pyridoxine 5'-phosphate + phosphate + 2 H2O + H(+). It functions in the pathway cofactor biosynthesis; pyridoxine 5'-phosphate biosynthesis; pyridoxine 5'-phosphate from D-erythrose 4-phosphate: step 5/5. In terms of biological role, catalyzes the complicated ring closure reaction between the two acyclic compounds 1-deoxy-D-xylulose-5-phosphate (DXP) and 3-amino-2-oxopropyl phosphate (1-amino-acetone-3-phosphate or AAP) to form pyridoxine 5'-phosphate (PNP) and inorganic phosphate. The polypeptide is Pyridoxine 5'-phosphate synthase (Prochlorococcus marinus (strain NATL1A)).